The sequence spans 786 residues: Toll-like receptor 1 (786 aa).

The first 24 residues, 1-24 (MTSIFHFAIIFMLILQIRIQLSEE), serve as a signal peptide directing secretion. Residues 25 to 580 (SEFLVDRSKN…HMSELSCNIT (556 aa)) lie on the Extracellular side of the membrane. N51 is a glycosylation site (N-linked (GlcNAc...) asparagine). LRR repeat units lie at residues 54–77 (QNYI…LIIS), 78–101 (HNRI…LDLS), 102–125 (HNKL…SFNA), 126–150 (FDAL…STTH), 151–175 (LEKS…GETY), 176–199 (GEKE…FPTN), 200–223 (KEFH…NIKC), 224–250 (VLED…SNLT), 251–278 (LNNI…YFSI), 279–308 (SNVK…HQVV), 309–337 (SDVF…SGTR), 338–361 (MVHM…NLLT), 362–388 (DTVF…KELS), 389–414 (KIAE…SYDE), 415–437 (KKGD…ILTD), 438–457 (TIFR…SNKI), 458–478 (KSIP…VAFN), 479–500 (SLTD…IDHN), and 501–524 (SVSH…AGDN). C110 and C132 are joined by a disulfide. N137 and N163 each carry an N-linked (GlcNAc...) asparagine glycan. C223 and C230 form a disulfide bridge. Positions 313–316 (GFPQ) are interaction with bacterial lipopeptide. An N-linked (GlcNAc...) asparagine glycan is attached at N330. C343 and C368 are joined by a disulfide. C419 and C442 form a disulfide bridge. N-linked (GlcNAc...) asparagine glycosylation occurs at N429. An LRRCT domain is found at 525 to 579 (PFQCTCELGEFVKNIDQVSSEVLEGWPDSYKCDYPESYRGTLLKDFHMSELSCNI). N578 is a glycosylation site (N-linked (GlcNAc...) asparagine). The chain crosses the membrane as a helical span at residues 581–601 (LLIVTIVATMLVLAVTVTSLC). Residues 602–786 (SYLDLPWYLR…NIKLTEQAKK (185 aa)) lie on the Cytoplasmic side of the membrane. The region spanning 635-776 (LQFHAFISYS…LFWANLRAAI (142 aa)) is the TIR domain.

This sequence belongs to the Toll-like receptor family. Interacts (via extracellular domain) with TLR2. TLR2 seems to exist in heterodimers with either TLR1 or TLR6 before stimulation by the ligand. The heterodimers form bigger oligomers in response to their corresponding ligands as well as further heterotypic associations with other receptors such as CD14 and/or CD36. The activation cluster TLR2:TLR1:CD14 forms in response to triacylated lipopeptides. Binds MYD88 (via TIR domain). Interacts with CNPY3. Interacts with neutrophil recruitment protein from Aedes aegypti saliva; the interaction probably promotes activation of canonical NF-kappa-B signaling in skin-resident macrophages and subsequent expression of neutrophil chemoattractants. Ubiquitous. Highly expressed in spleen, ovary, peripheral blood leukocytes, thymus and small intestine.

Its subcellular location is the cell membrane. The protein localises to the cytoplasmic vesicle. It is found in the phagosome membrane. It localises to the membrane raft. The protein resides in the golgi apparatus. Its function is as follows. Participates in the innate immune response to microbial agents. Specifically recognizes diacylated and triacylated lipopeptides. Cooperates with TLR2 to mediate the innate immune response to bacterial lipoproteins or lipopeptides. Forms the activation cluster TLR2:TLR1:CD14 in response to triacylated lipopeptides, this cluster triggers signaling from the cell surface and subsequently is targeted to the Golgi in a lipid-raft dependent pathway. Acts via MYD88 and TRAF6, leading to NF-kappa-B activation, cytokine secretion and the inflammatory response. The chain is Toll-like receptor 1 (TLR1) from Homo sapiens (Human).